The chain runs to 250 residues: ATP synthase subunit a (250 aa).

5 helical membrane passes run 27 to 47, 83 to 103, 129 to 149, 191 to 211, and 219 to 239; these read TDTV…AFYL, IAPF…ISNW, INYV…AGIW, IFAG…IMWA, and FDLF…ILYF.

The protein belongs to the ATPase A chain family. As to quaternary structure, F-type ATPases have 2 components, CF(1) - the catalytic core - and CF(0) - the membrane proton channel. CF(1) has five subunits: alpha(3), beta(3), gamma(1), delta(1), epsilon(1). CF(0) has three main subunits: a(1), b(2) and c(9-12). The alpha and beta chains form an alternating ring which encloses part of the gamma chain. CF(1) is attached to CF(0) by a central stalk formed by the gamma and epsilon chains, while a peripheral stalk is formed by the delta and b chains.

The protein localises to the cell membrane. In terms of biological role, key component of the proton channel; it plays a direct role in the translocation of protons across the membrane. The polypeptide is ATP synthase subunit a (Mycobacterium marinum (strain ATCC BAA-535 / M)).